A 343-amino-acid chain; its full sequence is Anthranilate phosphoribosyltransferase (343 aa).

5-phospho-alpha-D-ribose 1-diphosphate is bound by residues glycine 85, 88–89, threonine 93, 95–98, 113–121, and alanine 125; these read GD, NIST, and KHGGRSVSS. Position 85 (glycine 85) interacts with anthranilate. Serine 97 contributes to the Mg(2+) binding site. Arginine 171 lines the anthranilate pocket. Aspartate 230 and glutamate 231 together coordinate Mg(2+).

It belongs to the anthranilate phosphoribosyltransferase family. Homodimer. Mg(2+) serves as cofactor.

The enzyme catalyses N-(5-phospho-beta-D-ribosyl)anthranilate + diphosphate = 5-phospho-alpha-D-ribose 1-diphosphate + anthranilate. It participates in amino-acid biosynthesis; L-tryptophan biosynthesis; L-tryptophan from chorismate: step 2/5. Catalyzes the transfer of the phosphoribosyl group of 5-phosphorylribose-1-pyrophosphate (PRPP) to anthranilate to yield N-(5'-phosphoribosyl)-anthranilate (PRA). This is Anthranilate phosphoribosyltransferase from Aromatoleum aromaticum (strain DSM 19018 / LMG 30748 / EbN1) (Azoarcus sp. (strain EbN1)).